The following is a 1363-amino-acid chain: Xanthine dehydrogenase (1363 aa).

A 2Fe-2S ferredoxin-type domain is found at 35-121 (DTIRFYLNGT…GKHVITVEGI (87 aa)). Cys73, Cys78, Cys81, Cys103, Cys142, Cys145, Cys177, and Cys179 together coordinate [2Fe-2S] cluster. The 185-residue stretch at 266–450 (FGNKRKKWYR…SSLRIPTASE (185 aa)) folds into the FAD-binding PCMH-type domain. Residues 294-301 (LIGGSTET), Phe374, 384-388 (SPAGN), Asp397, and Lys459 each bind FAD. Residues Gln798 and Phe829 each contribute to the Mo-molybdopterin site. Residues Glu833 and Arg911 each coordinate substrate. A Mo-molybdopterin-binding site is contributed by Arg943. The substrate site is built by Phe945 and Thr1041. Ala1110 provides a ligand contact to Mo-molybdopterin. The Proton acceptor role is filled by Glu1295.

It belongs to the xanthine dehydrogenase family. It depends on FAD as a cofactor. Requires Mo-molybdopterin as cofactor. [2Fe-2S] cluster is required as a cofactor.

It localises to the peroxisome. It catalyses the reaction xanthine + NAD(+) + H2O = urate + NADH + H(+). The enzyme catalyses hypoxanthine + NAD(+) + H2O = xanthine + NADH + H(+). Its function is as follows. Key enzyme in purine degradation. Catalyzes the oxidation of hypoxanthine to xanthine. Catalyzes the oxidation of xanthine to uric acid. The chain is Xanthine dehydrogenase (hxA) from Emericella nidulans (strain FGSC A4 / ATCC 38163 / CBS 112.46 / NRRL 194 / M139) (Aspergillus nidulans).